The following is a 209-amino-acid chain: Glycerol-3-phosphate acyltransferase (209 aa).

5 helical membrane passes run 13–33, 63–83, 94–114, 127–147, and 151–171; these read ALIA…GLLL, LAAA…LIAQ, PGLL…WLGF, LLGI…SIAF, and YSSL…WILG.

This sequence belongs to the PlsY family. Probably interacts with PlsX.

It is found in the cell inner membrane. The catalysed reaction is an acyl phosphate + sn-glycerol 3-phosphate = a 1-acyl-sn-glycero-3-phosphate + phosphate. It participates in lipid metabolism; phospholipid metabolism. In terms of biological role, catalyzes the transfer of an acyl group from acyl-phosphate (acyl-PO(4)) to glycerol-3-phosphate (G3P) to form lysophosphatidic acid (LPA). This enzyme utilizes acyl-phosphate as fatty acyl donor, but not acyl-CoA or acyl-ACP. The protein is Glycerol-3-phosphate acyltransferase of Allorhizobium ampelinum (strain ATCC BAA-846 / DSM 112012 / S4) (Agrobacterium vitis (strain S4)).